Reading from the N-terminus, the 490-residue chain is Protein nucleotidyltransferase YdiU (490 aa).

ATP contacts are provided by Gly-94, Gly-96, Arg-97, Lys-117, Asp-129, Gly-130, Arg-180, and Arg-187. Asp-256 acts as the Proton acceptor in catalysis. Mg(2+) is bound by residues Asn-257 and Asp-266. Asp-266 is an ATP binding site.

This sequence belongs to the SELO family. Requires Mg(2+) as cofactor. It depends on Mn(2+) as a cofactor.

It carries out the reaction L-seryl-[protein] + ATP = 3-O-(5'-adenylyl)-L-seryl-[protein] + diphosphate. The enzyme catalyses L-threonyl-[protein] + ATP = 3-O-(5'-adenylyl)-L-threonyl-[protein] + diphosphate. The catalysed reaction is L-tyrosyl-[protein] + ATP = O-(5'-adenylyl)-L-tyrosyl-[protein] + diphosphate. It catalyses the reaction L-histidyl-[protein] + UTP = N(tele)-(5'-uridylyl)-L-histidyl-[protein] + diphosphate. It carries out the reaction L-seryl-[protein] + UTP = O-(5'-uridylyl)-L-seryl-[protein] + diphosphate. The enzyme catalyses L-tyrosyl-[protein] + UTP = O-(5'-uridylyl)-L-tyrosyl-[protein] + diphosphate. In terms of biological role, nucleotidyltransferase involved in the post-translational modification of proteins. It can catalyze the addition of adenosine monophosphate (AMP) or uridine monophosphate (UMP) to a protein, resulting in modifications known as AMPylation and UMPylation. The polypeptide is Protein nucleotidyltransferase YdiU (Clostridium perfringens (strain ATCC 13124 / DSM 756 / JCM 1290 / NCIMB 6125 / NCTC 8237 / Type A)).